We begin with the raw amino-acid sequence, 514 residues long: MELSWGRAFWRNFLGQSPDWYKLALIAFLIANPLIFFINPFVAGWLLVAEFIFTLAMALKCYPLLPGGLLAIEAVIIGMTSAAHVREEVAANLEVLLLLMFMVAGIYFMKQLLLFIFTRLLLSIRSKMLLSLAFCMAAAFLSAFLDALTVVAVVISVAVGFYGIYHRVASARGEENDLQDDDHLDQNSKAVLEQFRGFLRSLMMHAGVGTALGGVMTMVGEPQNLIIAKAAGWHFGDFFLRMSPVTVPVLICGLFTCVLVEKLRWFGYGETLPEKVRHILQEFDDQSRQRRTRQDKLNLFVQAIIGVWLVTALALHLAEVGLIGLSVIILATSLTGVTDEHAIGKAFTESLPFTALLTVFFSIVAVIIDQHLFAPIIQFVLQASEHAQLTLFYLFNGLLSSISDNVFVGTIYINEAKAAMESGAISMKQYELLAVAINTGTNLPSVATPNGQAAFLFLLTSALAPLIRLSYGRMVWMALPYTLVLTLVGLLCVEFTLTPITEWMTQSGWLATFS.

Helical transmembrane passes span 23–43, 63–83, 97–117, 120–140, 144–164, 202–222, 238–258, 303–323, 357–377, 391–411, 447–467, and 475–495; these read LALIAFLIANPLIFFINPFVA, PLLPGGLLAIEAVIIGMTSAA, LLLMFMVAGIYFMKQLLLFIF, LLLSIRSKMLLSLAFCMAAAF, FLDALTVVAVVISVAVGFYGI, LMMHAGVGTALGGVMTMVGEP, FFLRMSPVTVPVLICGLFTCV, AIIGVWLVTALALHLAEVGLI, LTVFFSIVAVIIDQHLFAPII, LFYLFNGLLSSISDNVFVGTI, ATPNGQAAFLFLLTSALAPLI, and VWMALPYTLVLTLVGLLCVEF.

Belongs to the NhaB Na(+)/H(+) (TC 2.A.34) antiporter family.

The protein resides in the cell inner membrane. The catalysed reaction is 2 Na(+)(in) + 3 H(+)(out) = 2 Na(+)(out) + 3 H(+)(in). In terms of biological role, na(+)/H(+) antiporter that extrudes sodium in exchange for external protons. In Citrobacter koseri (strain ATCC BAA-895 / CDC 4225-83 / SGSC4696), this protein is Na(+)/H(+) antiporter NhaB.